Reading from the N-terminus, the 121-residue chain is Large ribosomal subunit protein eL18 (121 aa).

Belongs to the eukaryotic ribosomal protein eL18 family. Part of the 50S ribosomal subunit.

The protein is Large ribosomal subunit protein eL18 of Thermococcus kodakarensis (strain ATCC BAA-918 / JCM 12380 / KOD1) (Pyrococcus kodakaraensis (strain KOD1)).